The following is a 785-amino-acid chain: Semaphorin-3F (785 aa).

A signal peptide spans methionine 1–proline 18. In terms of domain architecture, Sema spans arginine 31 to leucine 545. A glycan (N-linked (GlcNAc...) asparagine) is linked at asparagine 53. The cysteines at positions 104 and 115 are disulfide-linked. N-linked (GlcNAc...) asparagine glycosylation occurs at asparagine 126. 4 disulfide bridges follow: cysteine 133-cysteine 142, cysteine 300-cysteine 412, cysteine 324-cysteine 372, and cysteine 548-cysteine 566. Residues arginine 583–asparagine 602 are disordered. Positions alanine 605–histidine 695 constitute an Ig-like C2-type domain. Cysteines 678 and 746 form a disulfide. A disordered region spans residues valine 753–threonine 785. Over residues proline 775 to threonine 785 the composition is skewed to basic residues.

The protein belongs to the semaphorin family. As to expression, expressed ubiquitously in adulthood. During embryogenesis, expressed in subregions of the central nervous system and various other tissues like skin, kidney, lung and intestine.

The protein resides in the secreted. The polypeptide is Semaphorin-3F (Sema3f) (Mus musculus (Mouse)).